The sequence spans 298 residues: DegV domain-containing protein UU535 (298 aa).

The region spanning 5–287 (FLIMTDSSTT…KGALGIQVIA (283 aa)) is the DegV domain. Residues Ser65 and Ser96 each contribute to the hexadecanoate site.

May bind long-chain fatty acids, such as palmitate, and may play a role in lipid transport or fatty acid metabolism. This chain is DegV domain-containing protein UU535, found in Ureaplasma parvum serovar 3 (strain ATCC 700970).